Reading from the N-terminus, the 270-residue chain is Formamidopyrimidine-DNA glycosylase (270 aa).

The active-site Schiff-base intermediate with DNA is proline 2. Catalysis depends on glutamate 3, which acts as the Proton donor. Residue lysine 58 is the Proton donor; for beta-elimination activity of the active site. Residues histidine 91, arginine 110, and arginine 151 each contribute to the DNA site. The FPG-type zinc finger occupies alanine 236–arginine 270. Arginine 260 acts as the Proton donor; for delta-elimination activity in catalysis.

It belongs to the FPG family. As to quaternary structure, monomer. Zn(2+) serves as cofactor.

The enzyme catalyses Hydrolysis of DNA containing ring-opened 7-methylguanine residues, releasing 2,6-diamino-4-hydroxy-5-(N-methyl)formamidopyrimidine.. It catalyses the reaction 2'-deoxyribonucleotide-(2'-deoxyribose 5'-phosphate)-2'-deoxyribonucleotide-DNA = a 3'-end 2'-deoxyribonucleotide-(2,3-dehydro-2,3-deoxyribose 5'-phosphate)-DNA + a 5'-end 5'-phospho-2'-deoxyribonucleoside-DNA + H(+). In terms of biological role, involved in base excision repair of DNA damaged by oxidation or by mutagenic agents. Acts as a DNA glycosylase that recognizes and removes damaged bases. Has a preference for oxidized purines, such as 7,8-dihydro-8-oxoguanine (8-oxoG). Has AP (apurinic/apyrimidinic) lyase activity and introduces nicks in the DNA strand. Cleaves the DNA backbone by beta-delta elimination to generate a single-strand break at the site of the removed base with both 3'- and 5'-phosphates. The sequence is that of Formamidopyrimidine-DNA glycosylase from Acidithiobacillus ferrooxidans (strain ATCC 23270 / DSM 14882 / CIP 104768 / NCIMB 8455) (Ferrobacillus ferrooxidans (strain ATCC 23270)).